The chain runs to 217 residues: Carboxylesterase Culp1 (217 aa).

Residues 1–32 (MTPRSLVRIVGVVVATTLALVSAPAGGRAAHA) form the signal peptide. Residues C35 and C107 are joined by a disulfide bond. S118 (nucleophile) is an active-site residue. C177 and C184 are oxidised to a cystine. The active site involves D181. The Proton donor/acceptor role is filled by H193.

The protein belongs to the cutinase family.

The protein localises to the secreted. It carries out the reaction a fatty acid ester + H2O = an aliphatic alcohol + a fatty acid + H(+). Shows esterase activity, with a preference for short- and medium-chain fatty acids. This chain is Carboxylesterase Culp1, found in Mycobacterium bovis (strain ATCC BAA-935 / AF2122/97).